Reading from the N-terminus, the 125-residue chain is Crustacean hyperglycemic hormones 5 (125 aa).

An N-terminal signal peptide occupies residues 1–34 (MKPGNTSFNMVSFRMVWTAMMATLLVAGASSAGT). Disulfide bonds link Cys58-Cys94, Cys74-Cys90, and Cys77-Cys103. Val123 is subject to Valine amide.

Belongs to the arthropod CHH/MIH/GIH/VIH hormone family. In terms of tissue distribution, produced by the medulla terminalis X-organ in the eyestalks and transported to the sinus gland where they are stored and released.

It is found in the secreted. Functionally, hormone found in the sinus gland of isopods and decapods which controls the blood sugar level. Has a secretagogue action over the amylase released from the midgut gland. May act as a stress hormone and may be involved in the control of molting and reproduction. The chain is Crustacean hyperglycemic hormones 5 from Penaeus japonicus (Kuruma prawn).